A 114-amino-acid polypeptide reads, in one-letter code: PDZK1-interacting protein 1 (114 aa).

The Extracellular segment spans residues 1 to 28 (MSALSLVILGLLMAVPPASCQQGLGNLQ). The helical transmembrane segment at 29–51 (PWMQGLIAVAVFLVLVAIAFAIN) threads the bilayer. Residues 52-114 (HFWCQEEREP…EEGRVHSTPM (63 aa)) are Cytoplasmic-facing. Ser-85 is subject to Phosphoserine. The tract at residues 92–114 (SNEHENAYENTSEEEGRVHSTPM) is disordered. Over residues 105 to 114 (EEGRVHSTPM) the composition is skewed to basic and acidic residues.

It belongs to the PDZK1-interacting protein 1/SMIM24 family. Forms a heterodimer (via N-terminal transmembrane helix) with SLC5A2/SGLT2 (via TM13); this interaction enhances SLC5A2 transporter activity. Interacts with PDZK1.

The protein localises to the apical cell membrane. Its function is as follows. Auxiliary protein of electrogenic Na(+)-coupled sugar symporter SLC5A2/SGLT2 and SLC5A1/SGLT1. Essential for the transporter activity of SLC5A2/SGLT2 but not SLC5A1/SGLT1. The polypeptide is PDZK1-interacting protein 1 (Sus scrofa (Pig)).